The sequence spans 497 residues: CRISPR-associated endodeoxyribonuclease Cas12f1 (497 aa).

The interval arginine 29–isoleucine 122 is recognition domain (REC). The tract at residues arginine 123–threonine 214 is wedge domain (WED). The tract at residues histidine 215 to lysine 223 is linker. The tract at residues valine 224–glutamine 374 is ruvC-I. Residues aspartate 228 and glutamate 327 contribute to the active site. A target nucleic acid-binding (TNB) region spans residues arginine 375–asparagine 432. Zn(2+)-binding residues include cysteine 376, cysteine 379, cysteine 395, and cysteine 398. Residues alanine 433–lysine 453 form a ruvC-II region. Aspartate 434 is a catalytic residue.

The protein belongs to the CRISPR-associated endonuclease Cas12f family. An asymmetric homodimer. Guide RNA is probably required for dimerization. It depends on Mg(2+) as a cofactor. The cofactor is Zn(2+).

CRISPR (clustered regularly interspaced short palindromic repeat), is an adaptive immune system that provides protection against mobile genetic elements (viruses, transposable elements and conjugative plasmids). CRISPR clusters contain sequences complementary to antecedent mobile elements and target invading nucleic acids. CRISPR clusters are transcribed and processed into CRISPR RNA (crRNA), which requires a trans-encoded small RNA (tracrRNA), but not this protein. Recognizes a short motif in the CRISPR repeat sequences (the 5' PAM or protospacer adjacent motif, TTC in this organism) to help distinguish self versus nonself, as targets within the CRISPR locus do not have PAMs. Has dsDNA endonuclease activity upon expression in E.coli of this protein, a mini CRISPR array and the probable tracrRNA. Plasmid cleavage is centered around positions 24 base pairs 3' of PAM. The mini system protects E.coli against transformation by foreign plasmids. In Syntrophomonas palmitatica (strain DSM 18709 / JCM 14374 / NBRC 102128 / MPA), this protein is CRISPR-associated endodeoxyribonuclease Cas12f1.